We begin with the raw amino-acid sequence, 505 residues long: uncharacterized protein (505 aa).

His-431 functions as the Proton acceptor in the catalytic mechanism.

It belongs to the GMC oxidoreductase family. The cofactor is FAD.

This is an uncharacterized protein from Sinorhizobium fredii (strain NBRC 101917 / NGR234).